The sequence spans 298 residues: Lipoyl synthase (298 aa).

Cys-40, Cys-45, Cys-51, Cys-67, Cys-71, Cys-74, and Ser-280 together coordinate [4Fe-4S] cluster. The 217-residue stretch at 53–269 (AVRKTATFMI…KEIALSKGFS (217 aa)) folds into the Radical SAM core domain.

Belongs to the radical SAM superfamily. Lipoyl synthase family. [4Fe-4S] cluster is required as a cofactor.

The protein localises to the cytoplasm. The enzyme catalyses [[Fe-S] cluster scaffold protein carrying a second [4Fe-4S](2+) cluster] + N(6)-octanoyl-L-lysyl-[protein] + 2 oxidized [2Fe-2S]-[ferredoxin] + 2 S-adenosyl-L-methionine + 4 H(+) = [[Fe-S] cluster scaffold protein] + N(6)-[(R)-dihydrolipoyl]-L-lysyl-[protein] + 4 Fe(3+) + 2 hydrogen sulfide + 2 5'-deoxyadenosine + 2 L-methionine + 2 reduced [2Fe-2S]-[ferredoxin]. It participates in protein modification; protein lipoylation via endogenous pathway; protein N(6)-(lipoyl)lysine from octanoyl-[acyl-carrier-protein]. In terms of biological role, catalyzes the radical-mediated insertion of two sulfur atoms into the C-6 and C-8 positions of the octanoyl moiety bound to the lipoyl domains of lipoate-dependent enzymes, thereby converting the octanoylated domains into lipoylated derivatives. The protein is Lipoyl synthase of Bacillus cytotoxicus (strain DSM 22905 / CIP 110041 / 391-98 / NVH 391-98).